Reading from the N-terminus, the 360-residue chain is Phosphoserine aminotransferase (360 aa).

L-glutamate is bound at residue arginine 42. Pyridoxal 5'-phosphate contacts are provided by residues 76 to 77, tryptophan 102, threonine 152, aspartate 172, and glutamine 195; that span reads AS. Lysine 196 bears the N6-(pyridoxal phosphate)lysine mark. Residue 237–238 coordinates pyridoxal 5'-phosphate; the sequence is NT.

This sequence belongs to the class-V pyridoxal-phosphate-dependent aminotransferase family. SerC subfamily. In terms of assembly, homodimer. Pyridoxal 5'-phosphate serves as cofactor.

The protein resides in the cytoplasm. It catalyses the reaction O-phospho-L-serine + 2-oxoglutarate = 3-phosphooxypyruvate + L-glutamate. The enzyme catalyses 4-(phosphooxy)-L-threonine + 2-oxoglutarate = (R)-3-hydroxy-2-oxo-4-phosphooxybutanoate + L-glutamate. Its pathway is amino-acid biosynthesis; L-serine biosynthesis; L-serine from 3-phospho-D-glycerate: step 2/3. Functionally, catalyzes the reversible conversion of 3-phosphohydroxypyruvate to phosphoserine and of 3-hydroxy-2-oxo-4-phosphonooxybutanoate to phosphohydroxythreonine. The polypeptide is Phosphoserine aminotransferase (Bacillus thuringiensis subsp. konkukian (strain 97-27)).